The primary structure comprises 303 residues: Bifunctional protein FolD (303 aa).

Residues 175 to 177 (GVS) and I243 each bind NADP(+).

This sequence belongs to the tetrahydrofolate dehydrogenase/cyclohydrolase family. Homodimer.

It carries out the reaction (6R)-5,10-methylene-5,6,7,8-tetrahydrofolate + NADP(+) = (6R)-5,10-methenyltetrahydrofolate + NADPH. The catalysed reaction is (6R)-5,10-methenyltetrahydrofolate + H2O = (6R)-10-formyltetrahydrofolate + H(+). The protein operates within one-carbon metabolism; tetrahydrofolate interconversion. Catalyzes the oxidation of 5,10-methylenetetrahydrofolate to 5,10-methenyltetrahydrofolate and then the hydrolysis of 5,10-methenyltetrahydrofolate to 10-formyltetrahydrofolate. The sequence is that of Bifunctional protein FolD from Xanthomonas oryzae pv. oryzae (strain PXO99A).